The primary structure comprises 207 residues: Ion-translocating oxidoreductase complex subunit G (207 aa).

A helical transmembrane segment spans residues 11–31; the sequence is GILLGFIALLCTIISAGIYFL. FMN phosphoryl threonine is present on T175.

Belongs to the RnfG family. As to quaternary structure, the complex is composed of six subunits: RnfA, RnfB, RnfC, RnfD, RnfE and RnfG. Requires FMN as cofactor.

Its subcellular location is the cell inner membrane. Functionally, part of a membrane-bound complex that couples electron transfer with translocation of ions across the membrane. The polypeptide is Ion-translocating oxidoreductase complex subunit G (Haemophilus influenzae (strain PittEE)).